We begin with the raw amino-acid sequence, 623 residues long: Actin-related protein 8 (623 aa).

The span at 1–24 (MTQTDRDAENGRDREKDREKEQQR) shows a compositional bias: basic and acidic residues. The segment at 1–29 (MTQTDRDAENGRDREKDREKEQQRGVKRP) is disordered. 283–286 (DVGD) contributes to the ATP binding site. Low complexity predominate over residues 428 to 438 (TQSKQDQSSKA). Residues 428-458 (TQSKQDQSSKASADRKSFPKPSSFEGESSVC) are disordered.

This sequence belongs to the actin family. ARP8 subfamily. As to quaternary structure, component of the chromatin remodeling INO80 complex; specifically part of a complex module associated with the DBINO domain of INO80. Exists as monomers and dimers, but the dimer is most probably the biologically relevant form required for stable interactions with histones that exploits the twofold symmetry of the nucleosome core.

It localises to the nucleus. The protein localises to the chromosome. Plays an important role in the functional organization of mitotic chromosomes. Exhibits low basal ATPase activity, and unable to polymerize. Its function is as follows. Proposed core component of the chromatin remodeling INO80 complex which is involved in transcriptional regulation, DNA replication and probably DNA repair. Required for the recruitment of INO80 (and probably the INO80 complex) to sites of DNA damage Strongly prefer nucleosomes and H3-H4 tetramers over H2A-H2B dimers, suggesting it may act as a nucleosome recognition module within the complex. The protein is Actin-related protein 8 (actr8) of Danio rerio (Zebrafish).